The sequence spans 329 residues: MTTGSNGPQDETPEPGTPGGPGPFSEEEIAAVTGPGPADELDELEAASIEEDSDEAPPDLETSFEKLLSKSRKLSTDRIRTVIESVLFVAERPLSVDELYMATGIERELIAEALNQLSGIHRDGISGIVLYEVAGGWQFRTDPHSGEYVRRYLRVKPQRLTRAAVETLAIIAYRQPVTRPEIEDIRGVDCGAVIKALMDRKLVKILGKREEVGRPILYGTSREFLEFFALKDLSALPTLREFHELTQEHREIVEKEDKPAPPAAGTVEALSDPAFTKRMEKSAAASEAALEDLEEAMAAADRTQKVSSSVLDTTPPEPETGDTTGPKPE.

3 disordered regions span residues 1-39 (MTTG…GPAD), 252-274 (IVEK…SDPA), and 286-329 (SEAA…PKPE).

This sequence belongs to the ScpB family. As to quaternary structure, homodimer. Homodimerization may be required to stabilize the binding of ScpA to the Smc head domains. Component of the Structural Maintenance of Chromosome (SMC) condensin-like complex composed of ScpA, ScpB and the Smc homodimer. ScpA and ScpB bind to the head domain of Smc, the presence of the three proteins is required for the association of the complex with DNA.

Its subcellular location is the cytoplasm. Functionally, a conditionally essential component of the chromosome segregation machinery. Required for chromosome condensation and partitioning. Important for positioning and anchoring of ParB-parS complexes (ori of replication) in the subpolar region, and of the ter replication site, as well as for segration of the ParB-parS complex and thus chromosome segregation. Probably acts via the formation of a condensin-like complex containing Smc, ScpA and ScpB that pulls DNA away from mid-cell into both cell halves. This is Segregation and condensation protein B from Myxococcus xanthus (strain DK1622).